The chain runs to 369 residues: Cobalamin-binding protein (369 aa).

A signal peptide spans Met-1–Ala-24. One can recognise a Fe/B12 periplasmic-binding domain in the interval Arg-62–Thr-319. A disordered region spans residues Thr-322–Ala-343. Over residues Pro-328 to Ala-343 the composition is skewed to low complexity.

The complex is composed of two ATP-binding proteins (BtuD), two transmembrane proteins (BtuC) and a solute-binding protein (BtuF).

Its function is as follows. Required for corrinoid utilization. Probably part of the ABC transporter complex BtuCDF involved in cobalamin (vitamin B12) import. Probably binds cobalamin and delivers it to the surface of BtuC. The sequence is that of Cobalamin-binding protein (btuF) from Halobacterium salinarum (strain ATCC 29341 / DSM 671 / R1).